A 232-amino-acid polypeptide reads, in one-letter code: MKLLILACFVALALARAKEELNASGETVESLSSSEESITHISKEKIEKLKREEQQQTENERQNKIHQFPQPQPLAHPYTEPIPYPILPQNILPLAQVPVVVPLLHPEVMKDSKAKETIVPKRKGMPFPKSPAEPFVEGQSLTLTDFEVLSLPLLQSLMHQIPQPVPQTPMFAPQPLLSLPQAKVLPVPQQVVPFPQRDMPFQALLLYQDPLLGPLQGFYPVPQPVAPVYNPV.

Residues 1–15 form the signal peptide; sequence MKLLILACFVALALA. Asn-22 carries N-linked (GlcNAc...) asparagine glycosylation. The residue at position 24 (Ser-24) is a Phosphoserine. Thr-27 is subject to Phosphothreonine. 4 positions are modified to phosphoserine: Ser-30, Ser-32, Ser-33, and Ser-34. Residues 48-63 are compositionally biased toward basic and acidic residues; it reads KLKREEQQQTENERQN. Positions 48 to 74 are disordered; sequence KLKREEQQQTENERQNKIHQFPQPQPL.

This sequence belongs to the beta-casein family. In terms of tissue distribution, mammary gland specific. Secreted in milk.

It is found in the secreted. Functionally, important role in determination of the surface properties of the casein micelles. This chain is Beta-casein (CSN2), found in Sus scrofa (Pig).